A 299-amino-acid chain; its full sequence is Protein FAM228A (299 aa).

Positions 135-201 are disordered; the sequence is AKGTSYQHGR…GRNRYKGASS (67 aa). The span at 146–159 shows a compositional bias: basic and acidic residues; that stretch reads KTHDTQKEAKETEK. At serine 264 the chain carries Phosphoserine.

It belongs to the FAM228 family.

The protein is Protein FAM228A (Fam228a) of Mus musculus (Mouse).